The following is a 428-amino-acid chain: Histidine--tRNA ligase (428 aa).

The protein belongs to the class-II aminoacyl-tRNA synthetase family. In terms of assembly, homodimer.

The protein localises to the cytoplasm. It catalyses the reaction tRNA(His) + L-histidine + ATP = L-histidyl-tRNA(His) + AMP + diphosphate + H(+). The protein is Histidine--tRNA ligase of Chromohalobacter salexigens (strain ATCC BAA-138 / DSM 3043 / CIP 106854 / NCIMB 13768 / 1H11).